The following is a 292-amino-acid chain: Zinc metalloproteinase nas-3 (292 aa).

The signal sequence occupies residues 1 to 16 (MYRFIIFFSLLALTAS). The 194-residue stretch at 56-249 (RGIAIHPWQW…RNINTLYKCN (194 aa)) folds into the Peptidase M12A domain. 2 disulfides stabilise this stretch: cysteine 103–cysteine 248 and cysteine 128–cysteine 158. A Zn(2+)-binding site is contributed by histidine 169. Residue glutamate 170 is part of the active site. Zn(2+) contacts are provided by histidine 173 and histidine 179.

Zn(2+) is required as a cofactor.

The protein localises to the secreted. Its function is as follows. Metalloprotease. The chain is Zinc metalloproteinase nas-3 (nas-3) from Caenorhabditis elegans.